The sequence spans 326 residues: Probable cell division protein WhiA (326 aa).

Positions 275–308 (SLDELGRLADPVMTKDAIAGRIRRLLAMADKRAL) form a DNA-binding region, H-T-H motif.

Belongs to the WhiA family.

In terms of biological role, involved in cell division and chromosome segregation. The polypeptide is Probable cell division protein WhiA (Pseudarthrobacter chlorophenolicus (strain ATCC 700700 / DSM 12829 / CIP 107037 / JCM 12360 / KCTC 9906 / NCIMB 13794 / A6) (Arthrobacter chlorophenolicus)).